The chain runs to 181 residues: Large ribosomal subunit protein uL5 (181 aa).

This sequence belongs to the universal ribosomal protein uL5 family. As to quaternary structure, part of the 50S ribosomal subunit; part of the 5S rRNA/L5/L18/L25 subcomplex. Contacts the 5S rRNA and the P site tRNA. Forms a bridge to the 30S subunit in the 70S ribosome.

In terms of biological role, this is one of the proteins that bind and probably mediate the attachment of the 5S RNA into the large ribosomal subunit, where it forms part of the central protuberance. In the 70S ribosome it contacts protein S13 of the 30S subunit (bridge B1b), connecting the 2 subunits; this bridge is implicated in subunit movement. Contacts the P site tRNA; the 5S rRNA and some of its associated proteins might help stabilize positioning of ribosome-bound tRNAs. In Helicobacter pylori (strain J99 / ATCC 700824) (Campylobacter pylori J99), this protein is Large ribosomal subunit protein uL5.